Here is a 249-residue protein sequence, read N- to C-terminus: Cytochrome c oxidase subunit 2 (249 aa).

The N-terminal stretch at Met-1–Asn-13 is a signal peptide. Residues Asp-14 to Asn-40 are Mitochondrial intermembrane-facing. Residues Ile-41–Thr-62 form a helical membrane-spanning segment. Residues Tyr-63 to Glu-80 lie on the Mitochondrial matrix side of the membrane. The helical transmembrane segment at Ile-81–Cys-105 threads the bilayer. Residues Asp-106–Gln-249 are Mitochondrial intermembrane-facing. Positions 184, 219, 221, 223, 227, and 230 each coordinate Cu cation. Glu-221 serves as a coordination point for Mg(2+).

Belongs to the cytochrome c oxidase subunit 2 family. Component of the cytochrome c oxidase (complex IV, CIV), a multisubunit enzyme composed of a catalytic core of 3 subunits and several supernumerary subunits. The complex exists as a monomer or a dimer and forms supercomplexes (SCs) in the inner mitochondrial membrane with ubiquinol-cytochrome c oxidoreductase (cytochrome b-c1 complex, complex III, CIII). Cu cation is required as a cofactor. In terms of processing, the signal sequence of COX2 is processed by IMP1.

It is found in the mitochondrion inner membrane. It catalyses the reaction 4 Fe(II)-[cytochrome c] + O2 + 8 H(+)(in) = 4 Fe(III)-[cytochrome c] + 2 H2O + 4 H(+)(out). Functionally, component of the cytochrome c oxidase, the last enzyme in the mitochondrial electron transport chain which drives oxidative phosphorylation. The respiratory chain contains 3 multisubunit complexes succinate dehydrogenase (complex II, CII), ubiquinol-cytochrome c oxidoreductase (cytochrome b-c1 complex, complex III, CIII) and cytochrome c oxidase (complex IV, CIV), that cooperate to transfer electrons derived from NADH and succinate to molecular oxygen, creating an electrochemical gradient over the inner membrane that drives transmembrane transport and the ATP synthase. Cytochrome c oxidase is the component of the respiratory chain that catalyzes the reduction of oxygen to water. Electrons originating from reduced cytochrome c in the intermembrane space (IMS) are transferred via the dinuclear copper A center (CU(A)) of subunit 2 and heme A of subunit 1 to the active site in subunit 1, a binuclear center (BNC) formed by heme A3 and copper B (CU(B)). The BNC reduces molecular oxygen to 2 water molecules using 4 electrons from cytochrome c in the IMS and 4 protons from the mitochondrial matrix. This is Cytochrome c oxidase subunit 2 (COX2) from Maudiozyma exigua (Yeast).